Reading from the N-terminus, the 358-residue chain is MSAYCGKYKDELIKNAAYIGTPGKGILAADESTGTIGKRFASINVENVEENRRSLRELLFTTPGALQHLSGVILFEETLYQKTKDGKPFVDVLKEGGVLPGIKVDKGTVEVAGTNKETTTQGHDDLGKRCAKYYEAGARFAKWRAVLKIGPNEPSQLSIDLNAQGLARYAIICQENGLVPIVEPEILVDGSHDIERCAYVTEKVLAACYKALNEHHVLLEGSLLKPNMVTPGSESKKVSPQLIAEYTVRALQRTVPAAVPAIVFLSGGQSEEEATVNLNAMNKLSTKKPWALSFSFGRALQQSTLKAWGGKTENVVKAQKAFITRCKANSEATLGTYQGDAVLGEGASESLHVKDYKY.

Substrate is bound at residue Arg39. Glu183 (proton acceptor) is an active-site residue. Catalysis depends on Lys225, which acts as the Schiff-base intermediate with dihydroxyacetone-P. Residues Ser266 to Gly268 and Arg298 each bind substrate.

It belongs to the class I fructose-bisphosphate aldolase family. As to quaternary structure, homotetramer.

It is found in the cytoplasm. It localises to the cytosol. The enzyme catalyses beta-D-fructose 1,6-bisphosphate = D-glyceraldehyde 3-phosphate + dihydroxyacetone phosphate. It participates in carbohydrate degradation; glycolysis; D-glyceraldehyde 3-phosphate and glycerone phosphate from D-glucose: step 4/4. Functionally, fructose-bisphosphate aldolase that plays a key role in glycolysis and gluconeogenesis. This Oryza sativa subsp. japonica (Rice) protein is Fructose-bisphosphate aldolase 3, cytoplasmic.